A 1146-amino-acid polypeptide reads, in one-letter code: DNA polymerase II large subunit (1146 aa).

The protein belongs to the archaeal DNA polymerase II family. Heterodimer of a large subunit and a small subunit.

The enzyme catalyses DNA(n) + a 2'-deoxyribonucleoside 5'-triphosphate = DNA(n+1) + diphosphate. It catalyses the reaction Exonucleolytic cleavage in the 3'- to 5'-direction to yield nucleoside 5'-phosphates.. Its function is as follows. Possesses two activities: a DNA synthesis (polymerase) and an exonucleolytic activity that degrades single-stranded DNA in the 3'- to 5'-direction. Has a template-primer preference which is characteristic of a replicative DNA polymerase. This is DNA polymerase II large subunit from Methanosarcina barkeri (strain Fusaro / DSM 804).